The chain runs to 499 residues: Xylulose kinase (499 aa).

Residue 81–82 (MH) coordinates substrate. The active-site Proton acceptor is aspartate 239.

It belongs to the FGGY kinase family.

It carries out the reaction D-xylulose + ATP = D-xylulose 5-phosphate + ADP + H(+). In terms of biological role, catalyzes the phosphorylation of D-xylulose to D-xylulose 5-phosphate. In Bacillus subtilis (strain 168), this protein is Xylulose kinase.